The primary structure comprises 98 residues: Acylphosphatase (98 aa).

The region spanning 12–98 (TYYVRVRGVV…DKRFERFQQH (87 aa)) is the Acylphosphatase-like domain. Residues R27 and N45 contribute to the active site.

It belongs to the acylphosphatase family.

It catalyses the reaction an acyl phosphate + H2O = a carboxylate + phosphate + H(+). In Burkholderia mallei (strain NCTC 10247), this protein is Acylphosphatase (acyP).